Consider the following 217-residue polypeptide: MTIRNFNYHMTHFVISAPDIRHLPRDEGIEVAFAGRSNAGKSSALNTLTGQKSLARTSKTPGRTQLINLFEVVEGVRLVDLPGYGYAEVPEEMKLKWQRALGEYLQKRNCLKGLVVLMDIRHPLKDLDQQMITWAVAVGTPVMLLLTKADKLASGARKAQLNMVREAIIPFMGDIQVEAFSSLKKIGVDKLREKLDTWFSEIPPEVMIDEYDDEEGK.

The EngB-type G domain maps to 27-201 (EGIEVAFAGR…REKLDTWFSE (175 aa)). Residues 35 to 42 (GRSNAGKS), 62 to 66 (GRTQL), 80 to 83 (DLPG), 147 to 150 (TKAD), and 180 to 182 (FSS) each bind GTP. 2 residues coordinate Mg(2+): serine 42 and threonine 64.

It belongs to the TRAFAC class TrmE-Era-EngA-EngB-Septin-like GTPase superfamily. EngB GTPase family. It depends on Mg(2+) as a cofactor.

Functionally, necessary for normal cell division and for the maintenance of normal septation. In Yersinia enterocolitica serotype O:8 / biotype 1B (strain NCTC 13174 / 8081), this protein is Probable GTP-binding protein EngB.